The sequence spans 870 residues: MGNRGMEELIPLVNKLQDAFSSIGQSCHLDLPQIAVVGGQSAGKSSVLENFVGRDFLPRGSGIVTRRPLILQLIFSKTEYAEFLHCKSKKFTDFDEVRQEIEAETDRVTGTNKGISPVPINLRVYSPHVLNLTLIDLPGITKVPVGDQPPDIEYQIKDMILQFISRESSLILAVTPANMDLANSDALKLAKEVDPQGLRTIGVITKLDLMDEGTDARDVLENKLLPLRRGYIGVVNRSQKDIEGRKDIRAALAAERKFFLSHPAYRHMADRMGTPHLQKTLNQQLTNHIRESLPTLRSKLQSQLLSLEKEVEEYKNFRPDDPTRKTKALLQMVQQFGVDFEKRIEGSGDQVDTLELSGGARINRIFHERFPFELVKMEFDEKDLRREISYAIKNIHGVRTGLFTPDLAFEAIVKKQVVKLKEPCLKCVDLVIQELISTVRQCTSKLSSYPRLREETERIVTTYIREREGRTKDQILLLIDIEQSYINTNHEDFIGFANAQQRSTQLNKKRAIPNQGEILVIRRGWLTINNISLMKGGSKEYWFVLTAESLSWYKDEEEKEKKYMLPLDNLKIRDVEKGFMSNKHVFAIFNTEQRNVYKDLRQIELACDSQEDVDSWKASFLRAGVYPEKDQAENEDGAQENTFSMDPQLERQVETIRNLVDSYVAIINKSIRDLMPKTIMHLMINNTKAFIHHELLAYLYSSADQSSLMEESAEQAQRRDDMLRMYHALKEALNIIGDISTSTVSTPVPPPVDDTWLQNTSSHSPTPQRRPVSSVHPPGRPPAVRGPTPGPPLIPMPVGATSSFSAPPIPSRPGPQNVFANNDPFSAPPQIPSRPARIPPGIPPGVPSRRAPAAPSRPTIIRPAEPSLLD.

The 267-residue stretch at 28–294 folds into the Dynamin-type G domain; that stretch reads HLDLPQIAVV…LTNHIRESLP (267 aa). A G1 motif region spans residues 38-45; it reads GGQSAGKS. Positions 41, 43, 44, 45, 46, 59, and 60 each coordinate GDP. The segment at 64-66 is G2 motif; the sequence is VTR. A G3 motif region spans residues 136–139; sequence DLPG. Positions 205–208 are G4 motif; sequence TKLD. 3 residues coordinate GDP: Lys206, Asp208, and Asp211. Residue Tyr231 is modified to Phosphotyrosine. Residues 235–238 are G5 motif; the sequence is VNRS. GDP is bound by residues Asn236, Arg237, and Gln239. An N6-acetyllysine modification is found at Lys299. A PH domain is found at 519–625; that stretch reads LVIRRGWLTI…WKASFLRAGV (107 aa). Tyr597 is subject to Phosphotyrosine. N6-acetyllysine is present on Lys598. The region spanning 653-744 is the GED domain; the sequence is VETIRNLVDS…IIGDISTSTV (92 aa). The segment at 741 to 870 is disordered; the sequence is TSTVSTPVPP…IRPAEPSLLD (130 aa). Thr755 is subject to Phosphothreonine. Residues 756–767 are compositionally biased toward polar residues; the sequence is WLQNTSSHSPTP. Ser764 bears the Phosphoserine; by CDK1 mark. Residues 826 to 846 are compositionally biased toward pro residues; it reads SAPPQIPSRPARIPPGIPPGV. Residues 847–864 show a composition bias toward low complexity; the sequence is PSRRAPAAPSRPTIIRPA.

This sequence belongs to the TRAFAC class dynamin-like GTPase superfamily. Dynamin/Fzo/YdjA family. In terms of assembly, oligomerizes into a helical polymer that self-assembles around the vesicle membrane, when associated to the menbrane through lipid binding. Interacts with SHANK1 and SHANK2. Interacts with SNX9. Interacts (via C-terminal proline-rich domain (PRD)) with SNX18 (via SH3 domain); this interaction regulates ATG9A and ATG16L1 trafficking from recycling endosomes to sites of autophagosome formation. Interacts with SNX33 (via SH3 domain). Interacts with PSTPIP1 (via SH3 domain). Interacts with CTNND2. Interacts (via C-terminal proline-rich domain (PRD)) with BIN1 (via SH3 domain); this interaction allows the recruitment of DNM2 to the membrane tubules and inhibits self-assembly-stimulated GTPase activity on the membrane. Interacts with GABARAP, GABARAPL1 and GABARAPL2. Interacts with MAP1LC3B (the lipidate and non-lipidated LC3 form); this interaction mediates recycling endosome scission leading to autophagosome release. Interacts with ITSN1. Interacts with MYOF. May interact with PIK3C3. May be a component of a complex composed of RAB5A (in GDP-bound form), DYN2 and PIK3C3. Interacts with SDC4; this interaction is markedly enhanced at focal ahesion site upon induction of focal adhesions and stress-fiber formation. Interacts with ACTN1. Interacts with CTTN; this interaction stimulates the intrinsic GTPase activity of DNM2 and stabilizes the association of DNM2 and actin filaments; in addition this interaction is stimulated by ligand binding to the receptor, leading to the recruitment of the DNM2-CTTN complex to the sequestered receptor-ligand complex to its internalization. Interacts with NOSTRIN (via SH3 domain); this interaction allows the recruitment of NOS3 to dynamin-positive structures. Interacts (via C-terminal proline-rich domain (PRD)) with SH3BP4 (via SH3 domain); this interaction controls the GTPase activity and is prevented by EGFR-induced tyrosine phosphorylation of either DNM2 or SH3BP4. Interacts with MYO1E (via SH3 domain). Interacts with TUBG1; this interaction may participate in centrosome cohesion. In terms of processing, phosphorylation at Ser-848 by GSK3-alpha relieves the inhibition of BIN1 and promotes endocytosis. Phosphorylation at Ser-764 by CDK1 is greatly increased upon mitotic entry. It regulates cytokinesis downstream of calcineurin, and does not affect clathrin-mediated endocytosis. Dephosphorylated by calcineurin/PP2 during cytokinesis in a Ca(2+)- and calmodulin-dependent manner. Phosphorylated on tyrosine residues by EGFR. Phosphorylated on tyrosine residues after activation of SRC. As to expression, ubiquitously expressed. Brain expression is restricted to glial cells and fibroblasts. Highest levels in the testis.

The protein localises to the cytoplasm. It localises to the cytoskeleton. It is found in the cytoplasmic vesicle. The protein resides in the clathrin-coated vesicle. Its subcellular location is the cell projection. The protein localises to the uropodium. It localises to the endosome. It is found in the microtubule organizing center. The protein resides in the centrosome. Its subcellular location is the centriole. The protein localises to the recycling endosome. It localises to the phagocytic cup. It is found in the phagosome membrane. The protein resides in the podosome. Its subcellular location is the cell junction. The protein localises to the postsynaptic density. It localises to the synapse. It is found in the synaptosome. The protein resides in the midbody. Its subcellular location is the membrane. The protein localises to the clathrin-coated pit. It localises to the cell membrane. It catalyses the reaction GTP + H2O = GDP + phosphate + H(+). Functionally, catalyzes the hydrolysis of GTP and utilizes this energy to mediate vesicle scission at plasma membrane during endocytosis and filament remodeling at many actin structures during organization of the actin cytoskeleton. Plays an important role in vesicular trafficking processes, namely clathrin-mediated endocytosis (CME), exocytic and clathrin-coated vesicle from the trans-Golgi network, and PDGF stimulated macropinocytosis. During vesicular trafficking process, associates to the membrane, through lipid binding, and self-assembles into ring-like structure through oligomerization to form a helical polymer around the vesicle membrane and leading to vesicle scission. Plays a role in organization of the actin cytoskeleton by mediating arrangement of stress fibers and actin bundles in podocytes. During organization of the actin cytoskeleton, self-assembles into ring-like structure that directly bundles actin filaments to form typical membrane tubules decorated with dynamin spiral polymers. Self-assembly increases GTPase activity and the GTP hydrolysis causes the rapid depolymerization of dynamin spiral polymers, and results in dispersion of actin bundles. Remodels, through its interaction with CTTN, bundled actin filaments in a GTPase-dependent manner and plays a role in orchestrating the global actomyosin cytoskeleton. The interaction with CTTN stabilizes the interaction of DNM2 and actin filaments and stimulates the intrinsic GTPase activity that results in actin filament-barbed ends and increases the sensitivity of filaments in bundles to the actin depolymerizing factor, CFL1. Plays a role in the autophagy process, by participating in the formation of ATG9A vesicles destined for the autophagosomes through its interaction with SNX18, by mediating recycling endosome scission leading to autophagosome release through MAP1LC3B interaction and by regulating maturation of apoptotic cell corpse-containing phagosomes by recruiting PIK3C3 to the phagosome membrane. Also plays a role in cytokinesis. May participate in centrosome cohesion through its interaction with TUBG1. Plays a role in the regulation of neuron morphology, axon growth and formation of neuronal growth cones. Involved in membrane tubulation. The protein is Dynamin-2 of Rattus norvegicus (Rat).